A 932-amino-acid chain; its full sequence is 2-oxoglutarate dehydrogenase E1 component (932 aa).

This sequence belongs to the alpha-ketoglutarate dehydrogenase family. Homodimer. Part of the 2-oxoglutarate dehydrogenase (OGDH) complex composed of E1 (2-oxoglutarate dehydrogenase), E2 (dihydrolipoamide succinyltransferase) and E3 (dihydrolipoamide dehydrogenase); the complex contains multiple copies of the three enzymatic components (E1, E2 and E3). It depends on thiamine diphosphate as a cofactor.

It catalyses the reaction N(6)-[(R)-lipoyl]-L-lysyl-[protein] + 2-oxoglutarate + H(+) = N(6)-[(R)-S(8)-succinyldihydrolipoyl]-L-lysyl-[protein] + CO2. Functionally, E1 component of the 2-oxoglutarate dehydrogenase (OGDH) complex which catalyzes the decarboxylation of 2-oxoglutarate, the first step in the conversion of 2-oxoglutarate to succinyl-CoA and CO(2). This is 2-oxoglutarate dehydrogenase E1 component from Staphylococcus aureus (strain USA300).